Reading from the N-terminus, the 167-residue chain is Methylated-DNA--protein-cysteine methyltransferase (167 aa).

The active-site Nucleophile; methyl group acceptor is the Cys-128.

Belongs to the MGMT family.

The protein localises to the cytoplasm. It carries out the reaction a 6-O-methyl-2'-deoxyguanosine in DNA + L-cysteinyl-[protein] = S-methyl-L-cysteinyl-[protein] + a 2'-deoxyguanosine in DNA. The enzyme catalyses a 4-O-methyl-thymidine in DNA + L-cysteinyl-[protein] = a thymidine in DNA + S-methyl-L-cysteinyl-[protein]. Its function is as follows. Involved in the cellular defense against the biological effects of O6-methylguanine (O6-MeG) and O4-methylthymine (O4-MeT) in DNA. Repairs the methylated nucleobase in DNA by stoichiometrically transferring the methyl group to a cysteine residue in the enzyme. This is a suicide reaction: the enzyme is irreversibly inactivated. In Methanocaldococcus jannaschii (strain ATCC 43067 / DSM 2661 / JAL-1 / JCM 10045 / NBRC 100440) (Methanococcus jannaschii), this protein is Methylated-DNA--protein-cysteine methyltransferase.